A 245-amino-acid polypeptide reads, in one-letter code: 3-deoxy-manno-octulosonate cytidylyltransferase (245 aa).

Belongs to the KdsB family.

Its subcellular location is the cytoplasm. The enzyme catalyses 3-deoxy-alpha-D-manno-oct-2-ulosonate + CTP = CMP-3-deoxy-beta-D-manno-octulosonate + diphosphate. It participates in nucleotide-sugar biosynthesis; CMP-3-deoxy-D-manno-octulosonate biosynthesis; CMP-3-deoxy-D-manno-octulosonate from 3-deoxy-D-manno-octulosonate and CTP: step 1/1. The protein operates within bacterial outer membrane biogenesis; lipopolysaccharide biosynthesis. In terms of biological role, activates KDO (a required 8-carbon sugar) for incorporation into bacterial lipopolysaccharide in Gram-negative bacteria. The protein is 3-deoxy-manno-octulosonate cytidylyltransferase of Elusimicrobium minutum (strain Pei191).